Consider the following 91-residue polypeptide: Small ribosomal subunit protein uS19 (91 aa).

The protein belongs to the universal ribosomal protein uS19 family.

In terms of biological role, protein S19 forms a complex with S13 that binds strongly to the 16S ribosomal RNA. In Synechococcus sp. (strain CC9605), this protein is Small ribosomal subunit protein uS19.